The following is a 360-amino-acid chain: Mitogen-activated protein kinase 14 (360 aa).

An N-acetylserine modification is found at serine 2. Serine 2 carries the phosphoserine modification. Threonine 16 is modified (phosphothreonine). Positions 24 to 308 (YQNLSPVGSG…AAQALAHAYF (285 aa)) constitute a Protein kinase domain. ATP-binding positions include 30 to 38 (VGSGAYGSV) and lysine 53. Lysine 53 carries the N6-acetyllysine modification. Residue aspartate 150 is the Proton acceptor of the active site. Residue lysine 152 is modified to N6-acetyllysine. Threonine 180 bears the Phosphothreonine mark. Positions 180 to 182 (TGY) match the TXY motif. Position 182 is a phosphotyrosine (tyrosine 182). A Phosphotyrosine; by ZAP70 modification is found at tyrosine 323.

This sequence belongs to the protein kinase superfamily. CMGC Ser/Thr protein kinase family. MAP kinase subfamily. In terms of assembly, component of a signaling complex containing at least AKAP13, PKN1, MAPK14, ZAK and MAP2K3. Within this complex, AKAP13 interacts directly with PKN1, which in turn recruits MAPK14, MAP2K3 and ZAK. Binds to a kinase interaction motif within the protein tyrosine phosphatase, PTPRR. This interaction retains MAPK14 in the cytoplasm and prevents nuclear accumulation. Interacts with SPAG9 and GADD45A. Interacts with CDC25B, CDC25C, DUSP1, DUSP10, DUSP16, NP60, SUPT20H and TAB1. Interacts with casein kinase II subunits CSNK2A1 and CSNK2B. Interacts with PPM1D. Interacts with CDK5RAP3; recruits PPM1D to MAPK14 and may regulate its dephosphorylation. Interacts with DUSP2; this interaction does not lead to catalytic activation of DUSP2 and dephosphrylation of MAPK14. It depends on Mg(2+) as a cofactor. Post-translationally, dually phosphorylated on Thr-180 and Tyr-182 by the MAP2Ks MAP2K3/MKK3, MAP2K4/MKK4 and MAP2K6/MKK6 in response to inflammatory cytokines, environmental stress or growth factors, which activates the enzyme. Dual phosphorylation can also be mediated by TAB1-mediated autophosphorylation. TCR engagement in T-cells also leads to Tyr-323 phosphorylation by ZAP70. Dephosphorylated and inactivated by DUPS1, DUSP10 and DUSP16. PPM1D also mediates dephosphorylation and inactivation of MAPK14. Acetylated at Lys-53 and Lys-152 by KAT2B and EP300. Acetylation at Lys-53 increases the affinity for ATP and enhances kinase activity. Lys-53 and Lys-152 are deacetylated by HDAC3. In terms of processing, ubiquitinated. Ubiquitination leads to degradation by the proteasome pathway.

It localises to the cytoplasm. It is found in the nucleus. The enzyme catalyses L-seryl-[protein] + ATP = O-phospho-L-seryl-[protein] + ADP + H(+). The catalysed reaction is L-threonyl-[protein] + ATP = O-phospho-L-threonyl-[protein] + ADP + H(+). With respect to regulation, activated by cell stresses such as DNA damage, heat shock, osmotic shock, anisomycin and sodium arsenite, as well as pro-inflammatory stimuli such as bacterial lipopolysaccharide (LPS) and interleukin-1. Activation occurs through dual phosphorylation of Thr-180 and Tyr-182 by either of two dual specificity kinases, MAP2K3/MKK3 or MAP2K6/MKK6, and potentially also MAP2K4/MKK4, as well as by TAB1-mediated autophosphorylation. MAPK14 phosphorylated on both Thr-180 and Tyr-182 is 10-20-fold more active than MAPK14 phosphorylated only on Thr-180, whereas MAPK14 phosphorylated on Tyr-182 alone is inactive. whereas Thr-180 is necessary for catalysis, Tyr-182 may be required for auto-activation and substrate recognition. Phosphorylated at Tyr-323 by ZAP70 in an alternative activation pathway in response to TCR signaling in T-cells. This alternative pathway is inhibited by GADD45A. Inhibited by dual specificity phosphatases, such as DUSP1, DUSP10, and DUSP16. Specifically inhibited by the binding of pyridinyl-imidazole compounds, which are cytokine-suppressive anti-inflammatory drugs (CSAID). SB203580 is an inhibitor of MAPK14. In terms of biological role, serine/threonine kinase which acts as an essential component of the MAP kinase signal transduction pathway. MAPK14 is one of the four p38 MAPKs which play an important role in the cascades of cellular responses evoked by extracellular stimuli such as pro-inflammatory cytokines or physical stress leading to direct activation of transcription factors. Accordingly, p38 MAPKs phosphorylate a broad range of proteins and it has been estimated that they may have approximately 200 to 300 substrates each. Some of the targets are downstream kinases which are activated through phosphorylation and further phosphorylate additional targets. RPS6KA5/MSK1 and RPS6KA4/MSK2 can directly phosphorylate and activate transcription factors such as CREB1, ATF1, the NF-kappa-B isoform RELA/NFKB3, STAT1 and STAT3, but can also phosphorylate histone H3 and the nucleosomal protein HMGN1. RPS6KA5/MSK1 and RPS6KA4/MSK2 play important roles in the rapid induction of immediate-early genes in response to stress or mitogenic stimuli, either by inducing chromatin remodeling or by recruiting the transcription machinery. On the other hand, two other kinase targets, MAPKAPK2/MK2 and MAPKAPK3/MK3, participate in the control of gene expression mostly at the post-transcriptional level, by phosphorylating ZFP36 (tristetraprolin) and ELAVL1, and by regulating EEF2K, which is important for the elongation of mRNA during translation. MKNK1/MNK1 and MKNK2/MNK2, two other kinases activated by p38 MAPKs, regulate protein synthesis by phosphorylating the initiation factor EIF4E2. MAPK14 also interacts with casein kinase II, leading to its activation through autophosphorylation and further phosphorylation of TP53/p53. In the cytoplasm, the p38 MAPK pathway is an important regulator of protein turnover. For example, CFLAR is an inhibitor of TNF-induced apoptosis whose proteasome-mediated degradation is regulated by p38 MAPK phosphorylation. In a similar way, MAPK14 phosphorylates the ubiquitin ligase SIAH2, regulating its activity towards EGLN3. MAPK14 may also inhibit the lysosomal degradation pathway of autophagy by interfering with the intracellular trafficking of the transmembrane protein ATG9. Another function of MAPK14 is to regulate the endocytosis of membrane receptors by different mechanisms that impinge on the small GTPase RAB5A. In addition, clathrin-mediated EGFR internalization induced by inflammatory cytokines and UV irradiation depends on MAPK14-mediated phosphorylation of EGFR itself as well as of RAB5A effectors. Ectodomain shedding of transmembrane proteins is regulated by p38 MAPKs as well. In response to inflammatory stimuli, p38 MAPKs phosphorylate the membrane-associated metalloprotease ADAM17. Such phosphorylation is required for ADAM17-mediated ectodomain shedding of TGF-alpha family ligands, which results in the activation of EGFR signaling and cell proliferation. Another p38 MAPK substrate is FGFR1. FGFR1 can be translocated from the extracellular space into the cytosol and nucleus of target cells, and regulates processes such as rRNA synthesis and cell growth. FGFR1 translocation requires p38 MAPK activation. In the nucleus, many transcription factors are phosphorylated and activated by p38 MAPKs in response to different stimuli. Classical examples include ATF1, ATF2, ATF6, ELK1, PTPRH, DDIT3, TP53/p53 and MEF2C and MEF2A. The p38 MAPKs are emerging as important modulators of gene expression by regulating chromatin modifiers and remodelers. The promoters of several genes involved in the inflammatory response, such as IL6, IL8 and IL12B, display a p38 MAPK-dependent enrichment of histone H3 phosphorylation on 'Ser-10' (H3S10ph) in LPS-stimulated myeloid cells. This phosphorylation enhances the accessibility of the cryptic NF-kappa-B-binding sites marking promoters for increased NF-kappa-B recruitment. Phosphorylates CDC25B and CDC25C which is required for binding to 14-3-3 proteins and leads to initiation of a G2 delay after ultraviolet radiation. Phosphorylates TIAR following DNA damage, releasing TIAR from GADD45A mRNA and preventing mRNA degradation. The p38 MAPKs may also have kinase-independent roles, which are thought to be due to the binding to targets in the absence of phosphorylation. Protein O-Glc-N-acylation catalyzed by the OGT is regulated by MAPK14, and, although OGT does not seem to be phosphorylated by MAPK14, their interaction increases upon MAPK14 activation induced by glucose deprivation. This interaction may regulate OGT activity by recruiting it to specific targets such as neurofilament H, stimulating its O-Glc-N-acylation. Required in mid-fetal development for the growth of embryo-derived blood vessels in the labyrinth layer of the placenta. Also plays an essential role in developmental and stress-induced erythropoiesis, through regulation of EPO gene expression. Phosphorylates S100A9 at 'Thr-113'. This chain is Mitogen-activated protein kinase 14, found in Rattus norvegicus (Rat).